A 189-amino-acid chain; its full sequence is Probable DNA-directed RNA polymerase subunit delta (189 aa).

The HTH HARE-type domain occupies Leu-14–Trp-81. Acidic residues-rich tracts occupy residues Glu-90–Glu-100 and Glu-118–Glu-189. The disordered stretch occupies residues Glu-90–Glu-189.

Belongs to the RpoE family. In terms of assembly, RNAP is composed of a core of 2 alpha, a beta and a beta' subunits. The core is associated with a delta subunit and one of several sigma factors.

In terms of biological role, participates in both the initiation and recycling phases of transcription. In the presence of the delta subunit, RNAP displays an increased specificity of transcription, a decreased affinity for nucleic acids, and an increased efficiency of RNA synthesis because of enhanced recycling. This is Probable DNA-directed RNA polymerase subunit delta from Lactobacillus delbrueckii subsp. bulgaricus (strain ATCC 11842 / DSM 20081 / BCRC 10696 / JCM 1002 / NBRC 13953 / NCIMB 11778 / NCTC 12712 / WDCM 00102 / Lb 14).